We begin with the raw amino-acid sequence, 1041 residues long: Sarcoplasmic/endoplasmic reticulum calcium ATPase 2 (1041 aa).

Over 1 to 48 (MENAHTKTVEEVLAYFGVNESTGLSLEQVKKLKEKWGSNELPAEEGKT) the chain is Cytoplasmic. The chain crosses the membrane as a helical span at residues 49–69 (LLELVIEQFEDLLVRILLLAA). Residues 70 to 89 (CISFVLAWFEEGEETITAFV) are Lumenal-facing. Residues 90–110 (EPFVILLILVANAIVGVWQER) form a helical membrane-spanning segment. The Cytoplasmic segment spans residues 111 to 253 (NAENAIEALK…QERTPLQQKL (143 aa)). The helical transmembrane segment at 254 to 273 (DEFGEQLSKVISLICIAVWI) threads the bilayer. Topologically, residues 274–295 (INIGHFNDPVHGGSWIRGAIYY) are lumenal. The helical transmembrane segment at 296-313 (FKIAVALAVAAIPEGLPA) threads the bilayer. Val304, Ala305, Ile307, and Glu309 together coordinate Ca(2+). Residues 314 to 756 (VITTCLALGT…EEGRAIYNNM (443 aa)) are Cytoplasmic-facing. The active-site 4-aspartylphosphate intermediate is Asp351. The Mg(2+) site is built by Asp351 and Thr353. ATP is bound by residues Thr353, Glu442, Arg489, Lys514, Arg559, Thr624, Gly625, Asp626, Arg677, and Lys683. Asp702 is a Mg(2+) binding site. Asn705 lines the ATP pocket. Residues 757-776 (KQFIRYLISSNVGEVVCIFL) form a helical membrane-spanning segment. Positions 767 and 770 each coordinate Ca(2+). Residues 777 to 786 (TAALGFPEAL) are Lumenal-facing. The chain crosses the membrane as a helical span at residues 787–807 (IPVQLLWVNLVTDGLPATALG). The interval 787–807 (IPVQLLWVNLVTDGLPATALG) is interaction with PLN. The Ca(2+) site is built by Asn795, Thr798, and Asp799. The Cytoplasmic portion of the chain corresponds to 808-827 (FNPPDLDIMNKPPRNPKEPL). Residues 828 to 850 (ISGWLFFRYLAIGCYVGAATVGA) form a helical membrane-spanning segment. Residues 851–896 (AAWWFIAADGGPRVTFYQLSHFLQCKEDNPDFSGVDCVVFESPYPM) lie on the Lumenal side of the membrane. Cys875 and Cys887 are joined by a disulfide. The helical transmembrane segment at 897–916 (TMALSVLVTIEMCNALNSLS) threads the bilayer. Glu907 serves as a coordination point for Ca(2+). Residues 917-929 (ENQSLMRMPPWEN) lie on the Cytoplasmic side of the membrane. Residues 930–948 (IWLVGAICLSMSLHFLILY) form a helical membrane-spanning segment. The interval 931–942 (WLVGAICLSMSL) is interaction with PLN. The Lumenal segment spans residues 949–963 (VEPLPIIFQITPLNV). The helical transmembrane segment at 964–984 (TQWLMVLKISLPVILLDETLK) threads the bilayer. Residues 985-1041 (YVARNYLEPGKDSVQPATKPCSLSACTEGVSWPFVFITLPLVIWLYSTDTNFSDMFW) lie on the Cytoplasmic side of the membrane.

Belongs to the cation transport ATPase (P-type) (TC 3.A.3) family. Type IIA subfamily. As to quaternary structure, interacts with sarcolipin (SLN). Interacts with phospholamban (PLN). Interacts with myoregulin (MRLN). Interacts with DWORF. Interacts with TMX2. Mg(2+) is required as a cofactor. Only isoform 2 is detected in heart, while both isoforms are expressed in brain, with isoform 2 being predominant.

The protein localises to the endoplasmic reticulum membrane. Its subcellular location is the sarcoplasmic reticulum membrane. The enzyme catalyses Ca(2+)(in) + ATP + H2O = Ca(2+)(out) + ADP + phosphate + H(+). Its activity is regulated as follows. Reversibly inhibited by phospholamban (PLN) at low calcium concentrations. Inhibited by sarcolipin (SLN) and myoregulin (MRLN). Enhanced by DWORF; DWORF increases activity by displacing sarcolipin (SLN), phospholamban (PLN) and myoregulin (MRLN). In terms of biological role, this magnesium-dependent enzyme catalyzes the hydrolysis of ATP coupled with the translocation of calcium from the cytosol to the sarcoplasmic reticulum lumen. Isoform SERCA2A is involved in the regulation of the contraction/relaxation cycle. May act as a regulator of TNFSF11-mediated Ca(2+) signaling during osteoclastogenesis. The protein is Sarcoplasmic/endoplasmic reticulum calcium ATPase 2 (ATP2A2) of Gallus gallus (Chicken).